The following is a 496-amino-acid chain: MKKYILSLDQGTTSSRAILFNKKGEIVHSAQKEFTQHFPKPGWVEHNAQEIWGSILAVIATCLSEADVKPEQIAGIGITNQRETTVVWDKTTSKPIYNAIVWQSRQTAEICDELKEKGYSEMVREKTGLLIDAYFSGTKVKWILDNVEGAREKAENGDLLFGTIDSWLVWKLSGGKAHVTDYSNASRTLMFNIHDLQWDDELLEMLTVPKSMLPEVRPSSEIYGETIDYHFFGQNVPIAGVAGDQQAALFGQACFGEGMAKNTYGTGCFMLMNTGEKAVASEHGLLTTIAWGIDGKVNYALEGSIFVAGSAIQWLRDGMRMFKDASESEVYASRVESTDGVYVVPAFVGLGTPYWDSEVRGAMFGVTRGTTKEHFIRATLESLAYQTKDVLCAMEADSGIELKTLRVDGGAVKNNFLMKFQSDILDVPVERPVINETTALGAAYLAGLAVGYWKNQDEIKSQWHMDKRFEPTMEAETSEELYAGWKKAIEATKAFK.

Thr12 serves as a coordination point for ADP. Residues Thr12, Thr13, and Ser14 each coordinate ATP. Residue Thr12 participates in sn-glycerol 3-phosphate binding. Arg16 provides a ligand contact to ADP. Residues Arg82, Glu83, and Tyr134 each contribute to the sn-glycerol 3-phosphate site. 3 residues coordinate glycerol: Arg82, Glu83, and Tyr134. His230 bears the Phosphohistidine; by HPr mark. Asp244 provides a ligand contact to sn-glycerol 3-phosphate. Asp244 and Gln245 together coordinate glycerol. Positions 266 and 309 each coordinate ADP. The ATP site is built by Thr266, Gly309, Gln313, and Gly410. Positions 410 and 414 each coordinate ADP.

It belongs to the FGGY kinase family. Homotetramer and homodimer (in equilibrium). In terms of processing, the phosphoenolpyruvate-dependent sugar phosphotransferase system (PTS), including enzyme I, and histidine-containing protein (HPr) are required for the phosphorylation, which leads to the activation of the enzyme.

It catalyses the reaction glycerol + ATP = sn-glycerol 3-phosphate + ADP + H(+). It participates in polyol metabolism; glycerol degradation via glycerol kinase pathway; sn-glycerol 3-phosphate from glycerol: step 1/1. With respect to regulation, activated by phosphorylation and inhibited by fructose 1,6-bisphosphate (FBP). Its function is as follows. Key enzyme in the regulation of glycerol uptake and metabolism. Catalyzes the phosphorylation of glycerol to yield sn-glycerol 3-phosphate. The sequence is that of Glycerol kinase from Bacillus cereus (strain G9842).